The following is a 341-amino-acid chain: Phosphoribosylformylglycinamidine cyclo-ligase (341 aa).

The protein belongs to the AIR synthase family.

The protein localises to the cytoplasm. It carries out the reaction 2-formamido-N(1)-(5-O-phospho-beta-D-ribosyl)acetamidine + ATP = 5-amino-1-(5-phospho-beta-D-ribosyl)imidazole + ADP + phosphate + H(+). Its pathway is purine metabolism; IMP biosynthesis via de novo pathway; 5-amino-1-(5-phospho-D-ribosyl)imidazole from N(2)-formyl-N(1)-(5-phospho-D-ribosyl)glycinamide: step 2/2. The chain is Phosphoribosylformylglycinamidine cyclo-ligase from Alkaliphilus oremlandii (strain OhILAs) (Clostridium oremlandii (strain OhILAs)).